Consider the following 179-residue polypeptide: Small ribosomal subunit protein uS5 (179 aa).

The region spanning 22 to 85 (MIEKLVAVNR…EYARKRMSNV (64 aa)) is the S5 DRBM domain.

The protein belongs to the universal ribosomal protein uS5 family. In terms of assembly, part of the 30S ribosomal subunit. Contacts proteins S4 and S8.

In terms of biological role, with S4 and S12 plays an important role in translational accuracy. Located at the back of the 30S subunit body where it stabilizes the conformation of the head with respect to the body. The polypeptide is Small ribosomal subunit protein uS5 (Xylella fastidiosa (strain M23)).